Consider the following 591-residue polypeptide: MNQGKIITVSGPLVVASGMQEANIQDICRVGHLGLVGEIIEMRRDQASIQVYEETSGIGPGEPVVTTGCPLSVELGPGLISEMFDGIQRPLDRFQKATDSDFLIRGVAIPSLDRKAKWAFIPKLSVGQEVVAGDILGTVQETAVIEHRIMVPYKVSGTLVAIHAGDFTVTDTVYEIKQEDGSIYQGSLMQTWPVRQSRPVAQKLIPVEPLVTGQRVIDTFFPVTKGGAAAVPGPFGAGKTVVQHQIAKFANVDIVIYVGCGERGNEMTDVLNEFPELIDPNTGQSIMERTVLIANTSNMPVAAREASIYTGITIAEYFRDMGYSVAIMADSTSRWAEALREMSGRLQEMPGDEGYPAYLGSRIAEYYERAGRVRTLGSQEREGTITAIGAVSPPGGDISEPVTQNTLRIVKVFWGLDAPLAQRRHFPAINWLTSYSLYQDDVGSYIDRKQESNWSNKVTRAMAILQREASLEEIVRLVGLDSLSEQDRLTMAVARQIREDYLQQNAFDSVDTFTSFPKQEAMLTNILTFNEEASKALSLGAYFNEIMEGTAQVRDRIARSKFIPEENLEQIKGLTQKVTKEIHHVLAKGGI.

ATP is bound at residue 233 to 240; that stretch reads GPFGAGKT.

Belongs to the ATPase alpha/beta chains family.

The catalysed reaction is ATP + H2O + 4 H(+)(in) = ADP + phosphate + 5 H(+)(out). Functionally, produces ATP from ADP in the presence of a proton gradient across the membrane. The V-type alpha chain is a catalytic subunit. The polypeptide is V-type ATP synthase alpha chain (Streptococcus pyogenes serotype M2 (strain MGAS10270)).